We begin with the raw amino-acid sequence, 273 residues long: MRAALRLLATATATVRPSARFLKPGSPTGLTGLGTHPSPRSALLYLYNHTLDKLKQIPEHSLYRQSAEALTKHRLAIVEQYVPDGYDAWQERARKLLEKHKSDLTARQFDGQHARLVEGPDGRAYFIRQMVPPQDWRDVEWDGAVLDPHFSWVQTGEDVVGAVKLEDSDKLLELDKIRESDPVAYRQGLRDLGIKMGGVVEDKSPVEWESEPPLSAEQIAEMEARIGSGLIEEVVQVAEGELKLVDIMTQARPWEALEEEAPEGQWTYFERKE.

The N-terminal 8 residues, 1–8, are a transit peptide targeting the mitochondrion; sequence MRAALRLL.

This sequence belongs to the complex I NDUFA5 subunit family. In terms of assembly, complex I is composed of about 40 different subunits.

Its subcellular location is the mitochondrion inner membrane. Functionally, accessory subunit of the mitochondrial membrane respiratory chain NADH dehydrogenase (Complex I), that is believed not to be involved in catalysis. Complex I functions in the transfer of electrons from NADH to the respiratory chain. The immediate electron acceptor for the enzyme is believed to be ubiquinone. This is NADH-ubiquinone oxidoreductase 29.9 kDa subunit, mitochondrial (nuo-32) from Neurospora crassa (strain ATCC 24698 / 74-OR23-1A / CBS 708.71 / DSM 1257 / FGSC 987).